The primary structure comprises 157 residues: Endoribonuclease YbeY (157 aa).

Positions 116, 120, and 126 each coordinate Zn(2+).

It belongs to the endoribonuclease YbeY family. It depends on Zn(2+) as a cofactor.

Its subcellular location is the cytoplasm. In terms of biological role, single strand-specific metallo-endoribonuclease involved in late-stage 70S ribosome quality control and in maturation of the 3' terminus of the 16S rRNA. The polypeptide is Endoribonuclease YbeY (Paenarthrobacter aurescens (strain TC1)).